The sequence spans 83 residues: Small ribosomal subunit protein uS17 (83 aa).

This sequence belongs to the universal ribosomal protein uS17 family. As to quaternary structure, part of the 30S ribosomal subunit.

Its function is as follows. One of the primary rRNA binding proteins, it binds specifically to the 5'-end of 16S ribosomal RNA. This Synechococcus sp. (strain RCC307) protein is Small ribosomal subunit protein uS17.